A 216-amino-acid chain; its full sequence is Adenylate kinase (216 aa).

G10–T15 serves as a coordination point for ATP. An NMP region spans residues S30–V59. Residues T31, R36, Q57–V59, G85–R88, and Q92 each bind AMP. Residues G122–D159 are LID. Residues R123 and T132–Y133 contribute to the ATP site. AMP-binding residues include R156 and R167. An ATP-binding site is contributed by G202.

The protein belongs to the adenylate kinase family. In terms of assembly, monomer.

It is found in the cytoplasm. The enzyme catalyses AMP + ATP = 2 ADP. It functions in the pathway purine metabolism; AMP biosynthesis via salvage pathway; AMP from ADP: step 1/1. Catalyzes the reversible transfer of the terminal phosphate group between ATP and AMP. Plays an important role in cellular energy homeostasis and in adenine nucleotide metabolism. This chain is Adenylate kinase, found in Pseudomonas putida (strain ATCC 700007 / DSM 6899 / JCM 31910 / BCRC 17059 / LMG 24140 / F1).